The chain runs to 359 residues: 3-dehydroquinate synthase (359 aa).

NAD(+)-binding positions include 71-76 (DGEAHK), 105-109 (GVIGD), 129-130 (TT), Lys-142, Lys-151, and 169-172 (TLHT). The Zn(2+) site is built by Glu-184, His-247, and His-264.

Belongs to the sugar phosphate cyclases superfamily. Dehydroquinate synthase family. It depends on NAD(+) as a cofactor. Co(2+) serves as cofactor. Zn(2+) is required as a cofactor.

It is found in the cytoplasm. The catalysed reaction is 7-phospho-2-dehydro-3-deoxy-D-arabino-heptonate = 3-dehydroquinate + phosphate. The protein operates within metabolic intermediate biosynthesis; chorismate biosynthesis; chorismate from D-erythrose 4-phosphate and phosphoenolpyruvate: step 2/7. Its function is as follows. Catalyzes the conversion of 3-deoxy-D-arabino-heptulosonate 7-phosphate (DAHP) to dehydroquinate (DHQ). This chain is 3-dehydroquinate synthase, found in Neisseria meningitidis serogroup A / serotype 4A (strain DSM 15465 / Z2491).